The primary structure comprises 510 residues: Histidine ammonia-lyase (510 aa).

A cross-link (5-imidazolinone (Ala-Gly)) is located at residues Ala145–Gly147. A 2,3-didehydroalanine (Ser) modification is found at Ser146.

Belongs to the PAL/histidase family. In terms of processing, contains an active site 4-methylidene-imidazol-5-one (MIO), which is formed autocatalytically by cyclization and dehydration of residues Ala-Ser-Gly.

The protein resides in the cytoplasm. The catalysed reaction is L-histidine = trans-urocanate + NH4(+). Its pathway is amino-acid degradation; L-histidine degradation into L-glutamate; N-formimidoyl-L-glutamate from L-histidine: step 1/3. The sequence is that of Histidine ammonia-lyase from Stigmatella aurantiaca.